A 153-amino-acid polypeptide reads, in one-letter code: 4'-phosphopantetheinyl transferase B, mitochondrial (153 aa).

It belongs to the P-Pant transferase superfamily.

It localises to the mitochondrion. It catalyses the reaction apo-[ACP] + CoA = holo-[ACP] + adenosine 3',5'-bisphosphate + H(+). Functionally, acyl-carrier-protein synthase transfers the 4'-phosphopantetheine moiety from coenzyme A to a Ser of an acyl-carrier-protein. The 4'-phosphopantetheine (4'-PPT) portion of CoA provides the essential prosthetic group for a number of carrier proteins and multi-domain enzymes, priming them for the acceptance of acyl building blocks in fatty acid synthesis and many aspects of secondary metabolism mediated by polyketide synthases (PKSs) and non-ribosomal peptide synthetases (NRPSs). PptB is specific for the mitochondrial acyl carrier protein acpA. This chain is 4'-phosphopantetheinyl transferase B, mitochondrial, found in Aspergillus fumigatus (strain ATCC MYA-4609 / CBS 101355 / FGSC A1100 / Af293) (Neosartorya fumigata).